We begin with the raw amino-acid sequence, 60 residues long: Large ribosomal subunit protein uL30 (60 aa).

This sequence belongs to the universal ribosomal protein uL30 family. In terms of assembly, part of the 50S ribosomal subunit.

This Bacillus cereus (strain G9842) protein is Large ribosomal subunit protein uL30.